A 566-amino-acid chain; its full sequence is FAD-dependent monooxygenase asqG (566 aa).

The signal sequence occupies residues 1–19 (MAAFTVIIIGGSISGLTLA). FAD is bound by residues Glu33, Val47, Arg113, Asp313, and Ala326. The next 2 membrane-spanning stretches (helical) occupy residues 448–468 (ASSTVLWIILMLGMASLGAVW) and 482–502 (GYTLLTLSTFYNLMILFASAV).

It belongs to the paxM FAD-dependent monooxygenase family. FAD is required as a cofactor.

It is found in the membrane. The enzyme catalyses [(1'E)-3'-hydroxy-3',7'-dimethylocta-1',6'-dien-1'-yl]-quinolinone B + NADPH + O2 + H(+) = [(1'E)-5'-(3',3'-dimethyloxiran-2'-yl)-3'-hydroxy-3'-methylpent-1'-en-1'-yl]-quinolinone B + NADP(+) + H2O. It participates in secondary metabolite biosynthesis. It functions in the pathway alkaloid biosynthesis. The protein operates within mycotoxin biosynthesis. Its function is as follows. FAD-dependent monooxygenase; part of the gene cluster that mediates the biosynthesis of the aspoquinolone mycotoxins. Within the pathway, the FAD-dependent monooxygenase asqG catalyzes the epoxidation of the terminal C7'-C8' olefin to produce the intermediate [(1'E)-5'-(3',3'-dimethyloxiran-2'-yl)-3'-hydroxy-3'-methylpent-1'-en-1'-yl]-quinolinone B. The first step of the pathway is catalyzed by the nonribosomal peptide synthetase asqK that condenses anthranilic acid and O-methyl-L-tyrosine to produce 4'-methoxycyclopeptin. 4'-methoxycyclopeptin is then converted to 4'-methoxydehydrocyclopeptin by the ketoglutarate-dependent dioxygenase asqJ. AsqJ also converts its first product 4'-methoxydehydrocyclopeptin to 4'-methoxycyclopenin. The following conversion of 4'-methoxycyclopenin into 4'-methoxyviridicatin is catalyzed by the cyclopenase asqI. 4'-methoxyviridicatin is the precursor of quinolone natural products, and is further converted to quinolinone B. The prenyltransferase asqH1 then catalyzes the canonical Friedel-Crafts alkylation of quinolinone B with dimethylallyl cation to yield dimethylallyl quinolone, which is subjected to FAD-dependent dehydrogenation by the FAD-linked oxidoreductase asqF to yield conjugated aryl diene. The delta(3') double bond then serves as the site of the second alkylation with DMAPP catalyzed by the prenyltransferase asqH2 to yield a carbenium ion intermediate, which can be attacked by H(2)O to yield a styrenyl quinolone containing a C3'-hydroxyprenyl chain. The FAD-dependent monooxygenase asqG performs epoxidation of the terminal C7'-C8' olefin. Finally, after dehydratation of the epoxide at C3 by asqC, the quinolone epoxide rearrangement protein asqO catalyzes an enzymatic 3-exo-tet cyclization to yield the cyclopropyl-THF ring system in aspoquinolone. This is FAD-dependent monooxygenase asqG from Emericella nidulans (strain FGSC A4 / ATCC 38163 / CBS 112.46 / NRRL 194 / M139) (Aspergillus nidulans).